A 241-amino-acid chain; its full sequence is Small ribosomal subunit protein uS2 (241 aa).

Belongs to the universal ribosomal protein uS2 family.

In Glaesserella parasuis serovar 5 (strain SH0165) (Haemophilus parasuis), this protein is Small ribosomal subunit protein uS2.